The following is a 294-amino-acid chain: MPSLKDLKNRIASVKATQKITKAMKMVAAAKLRRAQEAAEAARPYSQRMGAVLANITAAVSDADGAPLLMTGTGKSDVHLLVVCTAERGLCGGFNSQIARFARDHVRKLLAEGKTVKIFTVGKKGYDILRREYASLIIERKELRDVKRVGFENADALGKRIIEMFEAGEFDVCTLFYSEFKSVISQVPTGLQLIPASAPAVVEEDAAHKGAVYEYEPDAASILADLIPRNISVQIFRALLENVAGEMGSKMSAMDNATRNAGEMINKLTLSYNRQRQAQITKELIEIISGAEAL.

The protein belongs to the ATPase gamma chain family. F-type ATPases have 2 components, CF(1) - the catalytic core - and CF(0) - the membrane proton channel. CF(1) has five subunits: alpha(3), beta(3), gamma(1), delta(1), epsilon(1). CF(0) has three main subunits: a, b and c.

It is found in the cell inner membrane. In terms of biological role, produces ATP from ADP in the presence of a proton gradient across the membrane. The gamma chain is believed to be important in regulating ATPase activity and the flow of protons through the CF(0) complex. In Rhizobium rhizogenes (strain K84 / ATCC BAA-868) (Agrobacterium radiobacter), this protein is ATP synthase gamma chain.